A 1411-amino-acid polypeptide reads, in one-letter code: Nuclear pore complex protein Nup160 homolog (1411 aa).

As to quaternary structure, part of the nuclear pore complex. Interacts with Nup98.

It is found in the nucleus. The protein resides in the nuclear pore complex. In terms of biological role, functions as a component of the nuclear pore complex (NPC). Involved in poly(A)+ RNA transport. Required for nuclear import of Mad. May play a role in double strand break DNA repair. Essential for nephrocyte development. This Drosophila melanogaster (Fruit fly) protein is Nuclear pore complex protein Nup160 homolog (Nup160).